A 477-amino-acid polypeptide reads, in one-letter code: Acylamidase (477 aa).

Catalysis depends on charge relay system residues lysine 82 and serine 157. The active-site Acyl-ester intermediate is the serine 181.

It belongs to the amidase family.

It carries out the reaction a monocarboxylic acid amide + H2O = a monocarboxylate + NH4(+). It catalyses the reaction an anilide + H2O = aniline + a carboxylate + H(+). The catalysed reaction is an N-acyl-L-amino acid + H2O = an L-alpha-amino acid + a carboxylate. The enzyme catalyses an N-acetyl-L-cysteine-S-conjugate + H2O = an S-substituted L-cysteine + acetate. With respect to regulation, amidase activity is completely suppressed by inhibitors of serine proteases (phenylmethylsulfonyl fluoride and diisopropyl fluorophosphate), partially inhibited by copper and mercury ions, but is not affected by inhibitors of aliphatic amidases (acetaldehyde and nitrophenyl disulfides) or by EDTA. In terms of biological role, amidase with broad substrate specificity, catalyzing the hydrolysis of a wide range of N-substituted amides, and, to a lesser extent, the hydrolysis of non-substituted amides. Acid para-nitroanilides (4'-nitroacetanilide, Gly-pNA, Ala-pNA, Leu-pNA) are the best substrates for this enzyme. N-substituted acrylamides (isopropyl acrylamide, N,N-dimethyl-aminopropyl acrylamide, and methylene-bis-acrylamide), N-acetyl derivatives of glycine, alanine and leucine, and aliphatic amides (acetamide, acrylamide, isobutyramide, n-butyramide, and valeramide) can also be used as substrates but with less efficiency. This Rhodococcus erythropolis (Arthrobacter picolinophilus) protein is Acylamidase.